The primary structure comprises 628 residues: UvrABC system protein C (628 aa).

The region spanning 20–99 (TSAGVYLMRD…IKTHKPRYNV (80 aa)) is the GIY-YIG domain. One can recognise a UVR domain in the interval 209–244 (AELLAQLEDQMQTAAAAMNFEHAARLRDRITGLNQL).

It belongs to the UvrC family. In terms of assembly, interacts with UvrB in an incision complex.

It is found in the cytoplasm. In terms of biological role, the UvrABC repair system catalyzes the recognition and processing of DNA lesions. UvrC both incises the 5' and 3' sides of the lesion. The N-terminal half is responsible for the 3' incision and the C-terminal half is responsible for the 5' incision. This Gloeobacter violaceus (strain ATCC 29082 / PCC 7421) protein is UvrABC system protein C.